A 774-amino-acid chain; its full sequence is Formin-like protein 13 (774 aa).

Positions Met1–Ala22 are cleaved as a signal peptide. The segment covering Pro51 to Ala67 has biased composition (pro residues). A disordered region spans residues Pro51 to Arg78. Over residues Ala68–Arg78 the composition is skewed to low complexity. A helical membrane pass occupies residues Ile89–Leu109. 4 disordered regions span residues Ala130 to Tyr163, His176 to Pro338, Phe374 to Leu402, and Gly740 to Ser774. A compositionally biased stretch (pro residues) spans Asp194–Pro216. A compositionally biased stretch (low complexity) spans Ser242–Pro261. The segment covering Met262–Arg286 has biased composition (pro residues). In terms of domain architecture, FH2 spans Gly326–Ala749.

The protein belongs to the formin-like family. Class-I subfamily.

The protein resides in the membrane. This chain is Formin-like protein 13 (FH13), found in Oryza sativa subsp. japonica (Rice).